A 310-amino-acid polypeptide reads, in one-letter code: Quinolinate synthase 2 (310 aa).

Residues His-30 and Ser-47 each coordinate iminosuccinate. Residue Cys-92 coordinates [4Fe-4S] cluster. Residues Tyr-118–Asn-120 and Ser-135 each bind iminosuccinate. [4Fe-4S] cluster is bound at residue Cys-177. Iminosuccinate is bound by residues His-203 to Glu-205 and Thr-220. Cys-265 is a [4Fe-4S] cluster binding site.

This sequence belongs to the quinolinate synthase family. Type 2 subfamily. The cofactor is [4Fe-4S] cluster.

Its subcellular location is the cytoplasm. The enzyme catalyses iminosuccinate + dihydroxyacetone phosphate = quinolinate + phosphate + 2 H2O + H(+). Its pathway is cofactor biosynthesis; NAD(+) biosynthesis; quinolinate from iminoaspartate: step 1/1. Its function is as follows. Catalyzes the condensation of iminoaspartate with dihydroxyacetone phosphate to form quinolinate. This Methanosarcina acetivorans (strain ATCC 35395 / DSM 2834 / JCM 12185 / C2A) protein is Quinolinate synthase 2.